A 255-amino-acid chain; its full sequence is Hydroxyacylglutathione hydrolase (255 aa).

Residues histidine 55, histidine 57, aspartate 59, histidine 60, histidine 111, aspartate 131, and histidine 169 each coordinate Zn(2+).

It belongs to the metallo-beta-lactamase superfamily. Glyoxalase II family. As to quaternary structure, monomer. Zn(2+) serves as cofactor.

The enzyme catalyses an S-(2-hydroxyacyl)glutathione + H2O = a 2-hydroxy carboxylate + glutathione + H(+). Its pathway is secondary metabolite metabolism; methylglyoxal degradation; (R)-lactate from methylglyoxal: step 2/2. Thiolesterase that catalyzes the hydrolysis of S-D-lactoyl-glutathione to form glutathione and D-lactic acid. This chain is Hydroxyacylglutathione hydrolase, found in Chromohalobacter salexigens (strain ATCC BAA-138 / DSM 3043 / CIP 106854 / NCIMB 13768 / 1H11).